Reading from the N-terminus, the 238-residue chain is Small ribosomal subunit protein uS2 (238 aa).

This sequence belongs to the universal ribosomal protein uS2 family.

The protein is Small ribosomal subunit protein uS2 of Actinobacillus pleuropneumoniae serotype 5b (strain L20).